We begin with the raw amino-acid sequence, 78 residues long: MAAHCQVTGAEPGFGHSISHSHRRNKRRFDPNIQKKRYWVPSLRRNVTLQVSARGIKTIDVRGIDAVVASILARGVKL.

The interval 1–31 (MAAHCQVTGAEPGFGHSISHSHRRNKRRFDP) is disordered.

It belongs to the bacterial ribosomal protein bL28 family.

This Pseudarthrobacter chlorophenolicus (strain ATCC 700700 / DSM 12829 / CIP 107037 / JCM 12360 / KCTC 9906 / NCIMB 13794 / A6) (Arthrobacter chlorophenolicus) protein is Large ribosomal subunit protein bL28.